Here is a 94-residue protein sequence, read N- to C-terminus: DNA gyrase subunit A (94 aa).

The region spanning 35–94 (LPDVRDGLKPVHRRILYGLNEQGMTPDKPYKKSARIVGDVMGKYHPHGDSSIYEAMVRMA) is the Topo IIA-type catalytic domain.

Belongs to the type II topoisomerase GyrA/ParC subunit family. Heterotetramer, composed of two GyrA and two GyrB chains. In the heterotetramer, GyrA contains the active site tyrosine that forms a transient covalent intermediate with DNA, while GyrB binds cofactors and catalyzes ATP hydrolysis.

It localises to the cytoplasm. The enzyme catalyses ATP-dependent breakage, passage and rejoining of double-stranded DNA.. Functionally, a type II topoisomerase that negatively supercoils closed circular double-stranded (ds) DNA in an ATP-dependent manner to modulate DNA topology and maintain chromosomes in an underwound state. Negative supercoiling favors strand separation, and DNA replication, transcription, recombination and repair, all of which involve strand separation. Also able to catalyze the interconversion of other topological isomers of dsDNA rings, including catenanes and knotted rings. Type II topoisomerases break and join 2 DNA strands simultaneously in an ATP-dependent manner. The chain is DNA gyrase subunit A from Staphylococcus epidermidis.